The following is a 353-amino-acid chain: Photosystem II D2 protein (353 aa).

Residue threonine 2 is modified to N-acetylthreonine. Phosphothreonine is present on threonine 2. The helical transmembrane segment at cysteine 41–threonine 61 threads the bilayer. Histidine 118 lines the chlorophyll a pocket. A helical membrane pass occupies residues glycine 125–proline 141. Residues glutamine 130 and asparagine 143 each coordinate pheophytin a. The helical transmembrane segment at valine 153 to serine 166 threads the bilayer. Histidine 198 provides a ligand contact to chlorophyll a. Residues alanine 208–aspartate 228 form a helical membrane-spanning segment. 2 residues coordinate a plastoquinone: histidine 215 and phenylalanine 262. Histidine 215 is a binding site for Fe cation. Histidine 269 is a binding site for Fe cation. The chain crosses the membrane as a helical span at residues glycine 279 to arginine 295.

This sequence belongs to the reaction center PufL/M/PsbA/D family. PSII is composed of 1 copy each of membrane proteins PsbA, PsbB, PsbC, PsbD, PsbE, PsbF, PsbH, PsbI, PsbJ, PsbK, PsbL, PsbM, PsbT, PsbX, PsbY, PsbZ, Psb30/Ycf12, at least 3 peripheral proteins of the oxygen-evolving complex and a large number of cofactors. It forms dimeric complexes. The cofactor is The D1/D2 heterodimer binds P680, chlorophylls that are the primary electron donor of PSII, and subsequent electron acceptors. It shares a non-heme iron and each subunit binds pheophytin, quinone, additional chlorophylls, carotenoids and lipids. There is also a Cl(-1) ion associated with D1 and D2, which is required for oxygen evolution. The PSII complex binds additional chlorophylls, carotenoids and specific lipids..

Its subcellular location is the plastid. It localises to the chloroplast thylakoid membrane. The catalysed reaction is 2 a plastoquinone + 4 hnu + 2 H2O = 2 a plastoquinol + O2. Photosystem II (PSII) is a light-driven water:plastoquinone oxidoreductase that uses light energy to abstract electrons from H(2)O, generating O(2) and a proton gradient subsequently used for ATP formation. It consists of a core antenna complex that captures photons, and an electron transfer chain that converts photonic excitation into a charge separation. The D1/D2 (PsbA/PsbD) reaction center heterodimer binds P680, the primary electron donor of PSII as well as several subsequent electron acceptors. D2 is needed for assembly of a stable PSII complex. This Phaseolus vulgaris (Kidney bean) protein is Photosystem II D2 protein.